The primary structure comprises 317 residues: Protein-L-isoaspartate O-methyltransferase (317 aa).

The active site involves S59.

The protein belongs to the methyltransferase superfamily. L-isoaspartyl/D-aspartyl protein methyltransferase family. Monomer.

It is found in the cytoplasm. It catalyses the reaction [protein]-L-isoaspartate + S-adenosyl-L-methionine = [protein]-L-isoaspartate alpha-methyl ester + S-adenosyl-L-homocysteine. Catalyzes the methyl esterification of L-isoaspartyl residues in peptides and proteins that result from spontaneous decomposition of normal L-aspartyl and L-asparaginyl residues. It plays a role in the repair and/or degradation of damaged proteins. This chain is Protein-L-isoaspartate O-methyltransferase (pcm), found in Thermotoga maritima (strain ATCC 43589 / DSM 3109 / JCM 10099 / NBRC 100826 / MSB8).